The chain runs to 340 residues: Putative methionyl-tRNA formyltransferase (340 aa).

Belongs to the Fmt family.

Its subcellular location is the mitochondrion. It localises to the mitochondrion matrix. The protein resides in the cytoplasm. The catalysed reaction is L-methionyl-tRNA(fMet) + (6R)-10-formyltetrahydrofolate = N-formyl-L-methionyl-tRNA(fMet) + (6S)-5,6,7,8-tetrahydrofolate + H(+). Functionally, formylates methionyl-tRNA in mitochondria and the cytoplasm. Responsible for the formylation of the N-terminally formylated (Nt-formylated) mitochondrial matrix proteins that are encoded by mitochondrial DNA. Nt-formylated proteins in the cytoplasm are strongly up-regulated in stationary phase or upon starvation for specific amino acids and are targeted for degradation by an E3 ubiquitin ligase-mediated fMet/N-end rule pathway. Increased Nt-formylation of cytosolic proteins appears to be important for adaptation to these stresses. In Schizosaccharomyces pombe (strain 972 / ATCC 24843) (Fission yeast), this protein is Putative methionyl-tRNA formyltransferase (fmt1).